The following is a 254-amino-acid chain: Triosephosphate isomerase (254 aa).

9–11 (NWK) is a binding site for substrate. The active-site Electrophile is the His-96. The active-site Proton acceptor is the Glu-168. Substrate is bound by residues Gly-174 and Ser-213.

It belongs to the triosephosphate isomerase family. Homodimer.

The protein localises to the cytoplasm. The catalysed reaction is D-glyceraldehyde 3-phosphate = dihydroxyacetone phosphate. It functions in the pathway carbohydrate biosynthesis; gluconeogenesis. The protein operates within carbohydrate degradation; glycolysis; D-glyceraldehyde 3-phosphate from glycerone phosphate: step 1/1. In terms of biological role, involved in the gluconeogenesis. Catalyzes stereospecifically the conversion of dihydroxyacetone phosphate (DHAP) to D-glyceraldehyde-3-phosphate (G3P). This is Triosephosphate isomerase from Buchnera aphidicola subsp. Schizaphis graminum (strain Sg).